We begin with the raw amino-acid sequence, 270 residues long: ATP synthase subunit b 1 (270 aa).

Residues 2–22 traverse the membrane as a helical segment; that stretch reads LIDWFTVIAQLINFLVLVWLL.

The protein belongs to the ATPase B chain family. In terms of assembly, F-type ATPases have 2 components, F(1) - the catalytic core - and F(0) - the membrane proton channel. F(1) has five subunits: alpha(3), beta(3), gamma(1), delta(1), epsilon(1). F(0) has three main subunits: a(1), b(2) and c(10-14). The alpha and beta chains form an alternating ring which encloses part of the gamma chain. F(1) is attached to F(0) by a central stalk formed by the gamma and epsilon chains, while a peripheral stalk is formed by the delta and b chains.

It is found in the cell inner membrane. Its function is as follows. F(1)F(0) ATP synthase produces ATP from ADP in the presence of a proton or sodium gradient. F-type ATPases consist of two structural domains, F(1) containing the extramembraneous catalytic core and F(0) containing the membrane proton channel, linked together by a central stalk and a peripheral stalk. During catalysis, ATP synthesis in the catalytic domain of F(1) is coupled via a rotary mechanism of the central stalk subunits to proton translocation. In terms of biological role, component of the F(0) channel, it forms part of the peripheral stalk, linking F(1) to F(0). The protein is ATP synthase subunit b 1 of Marinomonas sp. (strain MWYL1).